Consider the following 134-residue polypeptide: DNA-directed RNA polymerase subunit omega (134 aa).

The protein belongs to the RNA polymerase subunit omega family. The RNAP catalytic core consists of 2 alpha, 1 beta, 1 beta' and 1 omega subunit. When a sigma factor is associated with the core the holoenzyme is formed, which can initiate transcription.

The catalysed reaction is RNA(n) + a ribonucleoside 5'-triphosphate = RNA(n+1) + diphosphate. Functionally, promotes RNA polymerase assembly. Latches the N- and C-terminal regions of the beta' subunit thereby facilitating its interaction with the beta and alpha subunits. The protein is DNA-directed RNA polymerase subunit omega of Rhizobium johnstonii (strain DSM 114642 / LMG 32736 / 3841) (Rhizobium leguminosarum bv. viciae).